The primary structure comprises 87 residues: Pyocin-S1 immunity protein (87 aa).

The protein belongs to the colicins ColE2/ColE8/ColE9 and pyocins S1/S2 family.

In Pseudomonas aeruginosa, this protein is Pyocin-S1 immunity protein (imm1).